Reading from the N-terminus, the 544-residue chain is Peptide chain release factor 3 (544 aa).

The tr-type G domain occupies 17 to 286 (EKRRNFAIIS…SFLDYGLAPR (270 aa)). Residues 26-33 (SHPDAGKT), 94-98 (DTPGH), and 148-151 (NKMD) contribute to the GTP site.

It belongs to the TRAFAC class translation factor GTPase superfamily. Classic translation factor GTPase family. PrfC subfamily.

The protein resides in the cytoplasm. In terms of biological role, increases the formation of ribosomal termination complexes and stimulates activities of RF-1 and RF-2. It binds guanine nucleotides and has strong preference for UGA stop codons. It may interact directly with the ribosome. The stimulation of RF-1 and RF-2 is significantly reduced by GTP and GDP, but not by GMP. The sequence is that of Peptide chain release factor 3 from Microcystis aeruginosa (strain NIES-843 / IAM M-2473).